Consider the following 224-residue polypeptide: Protein-L-isoaspartate O-methyltransferase (224 aa).

S70 is a catalytic residue.

This sequence belongs to the methyltransferase superfamily. L-isoaspartyl/D-aspartyl protein methyltransferase family.

The protein resides in the cytoplasm. It catalyses the reaction [protein]-L-isoaspartate + S-adenosyl-L-methionine = [protein]-L-isoaspartate alpha-methyl ester + S-adenosyl-L-homocysteine. Catalyzes the methyl esterification of L-isoaspartyl residues in peptides and proteins that result from spontaneous decomposition of normal L-aspartyl and L-asparaginyl residues. It plays a role in the repair and/or degradation of damaged proteins. The chain is Protein-L-isoaspartate O-methyltransferase from Cellvibrio japonicus (strain Ueda107) (Pseudomonas fluorescens subsp. cellulosa).